The following is a 733-amino-acid chain: Vinexin (733 aa).

4 disordered regions span residues 1 to 51, 129 to 165, 224 to 285, and 352 to 448; these read MARI…SNLD, TWPG…RQDK, SARA…NQVP, and ETRL…KRKA. Basic and acidic residues predominate over residues 32–42; it reads DPNRVHTKEQL. Residues 147–157 are compositionally biased toward polar residues; it reads QHAQNWSATWT. The SoHo domain maps to 164–232; sequence DKRWVKYEGI…VSARASSAEP (69 aa). 2 stretches are compositionally biased toward polar residues: residues 245–256 and 264–277; these read PGTTETSSGRNW and RNTF…SSSG. Phosphoserine occurs at positions 412 and 459. 2 consecutive SH3 domains span residues 444–503 and 518–579; these read KKRK…VLPA and LEYG…INRE. The segment at 444 to 579 is binds to vinculin; that stretch reads KKRKAARLKF…PASYVQINRE (136 aa). Positions 584 to 672 are disordered; the sequence is LCDDGPQLPA…INLGPSSPNT (89 aa). Position 594 is a phosphoserine; by MAPK1 (serine 594). Positions 597–613 are enriched in low complexity; the sequence is PTTTAHLSSHSHPSSIP. Serine 607, serine 610, and serine 624 each carry phosphoserine. The span at 638 to 651 shows a compositional bias: polar residues; the sequence is EPRSQTQSLNTPGP. The SH3 3 domain occupies 674 to 733; that stretch reads IHWTPYRAMYQYRPQNEDELELREGDRVDVMQQCDDGWFVGVSRRTQKFGTFPGNYVAPV. Residues 674–733 form a binds to SOS region; the sequence is IHWTPYRAMYQYRPQNEDELELREGDRVDVMQQCDDGWFVGVSRRTQKFGTFPGNYVAPV.

As to quaternary structure, interacts with vinculin by the first two SH3 domains and the proline rich region of vinculin. Binds to SOS (guanine nucleotide exchange factor of RAS and RAC), through its third SH3 domain. The formation of this complex is down-regulated by phosphorylation of SOS. Interacts with SAFB2, INPPL1/SHIP2 and SRCIN1. Interacts with DLG5 through its third SH3 domain. Interacts with SOCS7 and MAPK1/ERK2. Interacts with FASLG. Post-translationally, phosphorylated at Ser-594 by MAPK1/ERK2 during cell spreading.

It localises to the cell junction. It is found in the focal adhesion. Its subcellular location is the cytoplasm. The protein localises to the cytoskeleton. In terms of biological role, promotes up-regulation of actin stress fiber formation. The polypeptide is Vinexin (Sorbs3) (Mus musculus (Mouse)).